The primary structure comprises 343 residues: Cytoplasmic tRNA 2-thiolation protein 1 (343 aa).

The protein belongs to the TtcA family. CTU1/NCS6/ATPBD3 subfamily.

Its subcellular location is the cytoplasm. It functions in the pathway tRNA modification; 5-methoxycarbonylmethyl-2-thiouridine-tRNA biosynthesis. Functionally, plays a central role in 2-thiolation of mcm(5)S(2)U at tRNA wobble positions of tRNA(Lys), tRNA(Glu) and tRNA(Gln). Directly binds tRNAs and probably acts by catalyzing adenylation of tRNAs, an intermediate required for 2-thiolation. It is unclear whether it acts as a sulfurtransferase that transfers sulfur from thiocarboxylated URM1 onto the uridine of tRNAs at wobble position. The sequence is that of Cytoplasmic tRNA 2-thiolation protein 1 from Drosophila mojavensis (Fruit fly).